Here is a 1200-residue protein sequence, read N- to C-terminus: Ice nucleation protein (1200 aa).

An octapeptide periodicity region spans residues 176 to 1151 (ATYGSTLSGD…LSAGEDSILI (976 aa)).

Belongs to the bacterial ice nucleation protein family.

The protein resides in the cell outer membrane. Ice nucleation proteins enable bacteria to nucleate crystallization in supercooled water. This Pseudomonas syringae pv. syringae protein is Ice nucleation protein (inaZ).